Reading from the N-terminus, the 507-residue chain is RNA demethylase ALKBH9B (507 aa).

Disordered regions lie at residues Gly76–Ser102 and Gln145–Asp183. Over residues Asp89–Asn100 the composition is skewed to basic and acidic residues. The segment covering Gln145–Arg160 has biased composition (acidic residues). Residues Thr174 to Asp183 show a composition bias toward basic and acidic residues. The Fe2OG dioxygenase domain maps to Val317–Asp414. Positions 335, 337, and 396 each coordinate Fe cation. Arg405 serves as a coordination point for 2-oxoglutarate. The disordered stretch occupies residues Glu432 to Gly507. A compositionally biased stretch (polar residues) spans Arg440–Leu450. Positions Gly497–Gly507 are enriched in basic residues.

It belongs to the alkB family. As to quaternary structure, (Microbial infection) Interacts with the capsid protein ORF3b of the alfalfa mosaic virus (AMV). It depends on Fe(2+) as a cofactor.

It localises to the cytoplasm. Its subcellular location is the P-body. The protein localises to the cytoplasmic granule. It carries out the reaction an N(6)-methyladenosine in mRNA + 2-oxoglutarate + O2 = an adenosine in mRNA + formaldehyde + succinate + CO2. Its function is as follows. Dioxygenase that demethylates RNA by oxidative demethylation: specifically demethylates N(6)-methyladenosine (m6A) RNA, the most prevalent internal modification of messenger RNA (mRNA) in higher eukaryotes. Modulates viral infection of the alfalfa mosaic virus (AMV) and the m6A abundance in its genomic RNAs. The protein is RNA demethylase ALKBH9B of Arabidopsis thaliana (Mouse-ear cress).